Here is a 573-residue protein sequence, read N- to C-terminus: 60 kDa heat shock protein, mitochondrial (573 aa).

The transit peptide at 1–26 (MLRLPTVFRQMRPVSRVLAPHLTRAY) directs the protein to the mitochondrion. K31 is subject to N6-succinyllysine. Phosphoserine is present on residues S67 and S70. Residue K75 coordinates ATP. Residue K75 is modified to N6-acetyllysine. The residue at position 82 (K82) is an N6-acetyllysine; alternate. K82 carries the post-translational modification N6-succinyllysine; alternate. Position 87 is an N6-acetyllysine (K87). Position 90 is a phosphotyrosine (Y90). An N6-acetyllysine modification is found at K91. An ATP-binding site is contributed by 111-115 (DGTTT). K125 is modified (N6-acetyllysine; alternate). K125 carries the N6-succinyllysine; alternate modification. Residue K130 is modified to N6-acetyllysine. Residue K133 is modified to N6-acetyllysine; alternate. At K133 the chain carries N6-succinyllysine; alternate. At K133 the chain carries N6-malonyllysine; alternate. K156 is modified (N6-acetyllysine). N6-acetyllysine; alternate occurs at positions 191, 202, 205, 218, and 236. N6-succinyllysine; alternate occurs at positions 191, 202, 205, 218, and 236. K249 is subject to N6-acetyllysine. K250 carries the N6-acetyllysine; alternate modification. Position 250 is an N6-succinyllysine; alternate (K250). An N6-acetyllysine mark is found at K269 and K292. K301 bears the N6-succinyllysine mark. At K314 the chain carries N6-acetyllysine. K352 bears the N6-acetyllysine; alternate mark. K352 carries the N6-succinyllysine; alternate modification. Residue K389 is modified to N6-acetyllysine. K396 is subject to N6-acetyllysine; alternate. K396 carries the N6-succinyllysine; alternate modification. Residue S410 is modified to Phosphoserine. G440 provides a ligand contact to ATP. Residue K469 is modified to N6-acetyllysine. An N6-acetyllysine; alternate modification is found at K481. The residue at position 481 (K481) is an N6-succinyllysine; alternate. Position 488 is a phosphoserine (S488). D520 is an ATP binding site. Residue K551 forms a Glycyl lysine isopeptide (Lys-Gly) (interchain with G-Cter in SUMO2) linkage.

Belongs to the chaperonin (HSP60) family. Homoheptamer arranged in a ring structure. The functional units of these chaperonins consist of heptameric rings of the large subunit Hsp60, which function as a back-to-back double ring. Interacts with 2 heptameric Hsp10 rings to form the symmetrical football complex. Interacts with HRAS. Interacts with ATAD3A. Interacts with ETFBKMT and EEF1AKMT3. Interacts with MFHAS1.

The protein resides in the mitochondrion matrix. The enzyme catalyses ATP + H2O + a folded polypeptide = ADP + phosphate + an unfolded polypeptide.. In terms of biological role, chaperonin implicated in mitochondrial protein import and macromolecular assembly. Together with Hsp10, facilitates the correct folding of imported proteins. May also prevent misfolding and promote the refolding and proper assembly of unfolded polypeptides generated under stress conditions in the mitochondrial matrix. The functional units of these chaperonins consist of heptameric rings of the large subunit Hsp60, which function as a back-to-back double ring. In a cyclic reaction, Hsp60 ring complexes bind one unfolded substrate protein per ring, followed by the binding of ATP and association with 2 heptameric rings of the co-chaperonin Hsp10. This leads to sequestration of the substrate protein in the inner cavity of Hsp60 where, for a certain period of time, it can fold undisturbed by other cell components. Synchronous hydrolysis of ATP in all Hsp60 subunits results in the dissociation of the chaperonin rings and the release of ADP and the folded substrate protein. The protein is 60 kDa heat shock protein, mitochondrial (HSPD1) of Pongo abelii (Sumatran orangutan).